Reading from the N-terminus, the 101-residue chain is DNA-directed RNA polymerase subunit beta (101 aa).

Residues 74 to 101 (KRRLSALGPGGLSRERAGLEVRDVHSSH) are disordered. Positions 86-101 (SRERAGLEVRDVHSSH) are enriched in basic and acidic residues.

Belongs to the RNA polymerase beta chain family. In terms of assembly, the RNAP catalytic core consists of 2 alpha, 1 beta, 1 beta' and 1 omega subunit. When a sigma factor is associated with the core the holoenzyme is formed, which can initiate transcription.

It carries out the reaction RNA(n) + a ribonucleoside 5'-triphosphate = RNA(n+1) + diphosphate. DNA-dependent RNA polymerase catalyzes the transcription of DNA into RNA using the four ribonucleoside triphosphates as substrates. The polypeptide is DNA-directed RNA polymerase subunit beta (rpoB) (Mycolicibacterium peregrinum (Mycobacterium peregrinum)).